Here is a 784-residue protein sequence, read N- to C-terminus: Serine/threonine-protein kinase DCLK2 (784 aa).

A disordered region spans residues 1–45; it reads MASTRSIELEHFEERDKRPRPGSRRGAPSSSGGSSSSGPKGNGLI. Residues 7–19 show a composition bias toward basic and acidic residues; the sequence is IELEHFEERDKRP. Low complexity predominate over residues 24-39; sequence RRGAPSSSGGSSSSGP. A Phosphothreonine modification is found at T61. Doublecortin domains lie at 72–158 and 197–280; these read KKAR…VDYT and KLVT…AQDD. Composition is skewed to low complexity over residues 300-312 and 341-364; these read AVKYSGSKSPGPS and TPSSQLSTPKSTKSSSSSPTSPGS. Residues 300 to 368 form a disordered region; the sequence is AVKYSGSKSP…PTSPGSFRGL (69 aa). S379 bears the Phosphoserine mark. One can recognise a Protein kinase domain in the interval 411-668; sequence YKIGKVIGDG…AGEILSHPWV (258 aa). ATP contacts are provided by residues 417–425 and K440; that span reads IGDGNFAVV. The active-site Proton acceptor is D532. Phosphoserine is present on S664. At T683 the chain carries Phosphothreonine. Positions 724–784 are disordered; sequence CQDSSRPGME…RAGTWRRHRD (61 aa). Residues 741-758 are compositionally biased toward low complexity; the sequence is SASAEEPPVSAPAAAPAP.

This sequence belongs to the protein kinase superfamily. CAMK Ser/Thr protein kinase family. CaMK subfamily. Binds to and stabilizes microtubules. Interacts with MAPK8IP1/JIP-1, MAPK8IP2/JIP-2, MAPK9/JNK2, PPP1R9B/NEURABIN-2 and actin. In terms of processing, autophosphorylated.

The protein localises to the cytoplasm. It localises to the cytoskeleton. It catalyses the reaction L-seryl-[protein] + ATP = O-phospho-L-seryl-[protein] + ADP + H(+). The enzyme catalyses L-threonyl-[protein] + ATP = O-phospho-L-threonyl-[protein] + ADP + H(+). In terms of biological role, protein kinase with a significantly reduced Ca(2+)/CAM affinity and dependence compared to other members of the CaMK family. May play a role in the down-regulation of CRE-dependent gene activation probably by phosphorylation of the CREB coactivator CRTC2/TORC2 and the resulting retention of TORC2 in the cytoplasm. This Ailuropoda melanoleuca (Giant panda) protein is Serine/threonine-protein kinase DCLK2 (DCLK2).